Consider the following 629-residue polypeptide: DNA-directed RNA polymerase subunit beta' (629 aa).

Zn(2+) is bound by residues C70, C72, C85, and C88. 3 residues coordinate Mg(2+): D472, D474, and D476.

This sequence belongs to the RNA polymerase beta' chain family. RpoC1 subfamily. In terms of assembly, in plastids the minimal PEP RNA polymerase catalytic core is composed of four subunits: alpha, beta, beta', and beta''. When a (nuclear-encoded) sigma factor is associated with the core the holoenzyme is formed, which can initiate transcription. Mg(2+) is required as a cofactor. It depends on Zn(2+) as a cofactor.

The protein resides in the plastid. The protein localises to the chloroplast. It carries out the reaction RNA(n) + a ribonucleoside 5'-triphosphate = RNA(n+1) + diphosphate. Functionally, DNA-dependent RNA polymerase catalyzes the transcription of DNA into RNA using the four ribonucleoside triphosphates as substrates. The protein is DNA-directed RNA polymerase subunit beta' of Pyropia yezoensis (Susabi-nori).